Here is a 239-residue protein sequence, read N- to C-terminus: Biosynthetic peptidoglycan transglycosylase (239 aa).

A helical membrane pass occupies residues 29–49 (GMFGLGALMLVWIVAYAVVPV).

It belongs to the glycosyltransferase 51 family.

Its subcellular location is the cell inner membrane. The enzyme catalyses [GlcNAc-(1-&gt;4)-Mur2Ac(oyl-L-Ala-gamma-D-Glu-L-Lys-D-Ala-D-Ala)](n)-di-trans,octa-cis-undecaprenyl diphosphate + beta-D-GlcNAc-(1-&gt;4)-Mur2Ac(oyl-L-Ala-gamma-D-Glu-L-Lys-D-Ala-D-Ala)-di-trans,octa-cis-undecaprenyl diphosphate = [GlcNAc-(1-&gt;4)-Mur2Ac(oyl-L-Ala-gamma-D-Glu-L-Lys-D-Ala-D-Ala)](n+1)-di-trans,octa-cis-undecaprenyl diphosphate + di-trans,octa-cis-undecaprenyl diphosphate + H(+). It participates in cell wall biogenesis; peptidoglycan biosynthesis. Peptidoglycan polymerase that catalyzes glycan chain elongation from lipid-linked precursors. The polypeptide is Biosynthetic peptidoglycan transglycosylase (Jannaschia sp. (strain CCS1)).